We begin with the raw amino-acid sequence, 261 residues long: Ribosome-inactivating protein PD-L3/PD-L4 (261 aa).

N10 carries an N-linked (GlcNAc...) asparagine; in PD-L3 glycan. 2 disulfide bridges follow: C34/C258 and C84/C105. E175 is an active-site residue.

It belongs to the ribosome-inactivating protein family. Type 1 RIP subfamily.

It carries out the reaction Endohydrolysis of the N-glycosidic bond at one specific adenosine on the 28S rRNA.. Inhibits protein synthesis. Does not cleave supercoiled pBR322 dsDNA. This Phytolacca dioica (Bella sombra tree) protein is Ribosome-inactivating protein PD-L3/PD-L4.